We begin with the raw amino-acid sequence, 973 residues long: MRWGCHLPRTSWGSGLGRTVPLPDELRIQSSWPFKGVHHPLRPPRAFIRHHGNSADSAPPPGRHGQLFRSISATEAIQRHRRNLTEWFSRLPREERQFGPTFALDTVHVDPVIRESTPDDLLRPSTELATGHQRTQAELPPLALSQLFDPDACGRRVQTVVLYGTVGTGKSTLVRKMVLDWCYGRLPAFELLIPFSCEDLSSLGSTPASLCQLVTQRYTPLKEVLPLMNAAGSRLLFVLHGLERLNLDFRLAGTGLCSDPEEPGAPAAIMVNLLRKYMLPEASILVTTRPSAIGRIPSKYVGRYGEICGFSDTNLQKLYFQLRLNQPDCGYGAGGTGVSVTPAQRDNLIQMLSRNLEGHHQIAAACFLPSYCWLVCATLHFLHAPTSAGQTLTSIYTSFLRLNFNGETLDSTDPSNLSLMSYAARTMGKLAYEGVSSRKTYFSEEDVRGCLEAGIKTEEEFQLLQIFRRDALRFFLAPCVEPGHLGTFVFTVPAMQEYLAALYIVLGLRKTALQRVGKEVFEFVGRVGEDVSLVLGIVAKLLPLRILPLLFNLLKVVPRVFGRMVSKSREAVAQAMVLEMFREEDYYNDDVLDQMGASILGVEGPRRHPDEPPEDEVFELFPMFMSGLLSAHNRAVLAQLGCPIKNLDALENAQAIKKKLGKMGRQVLPPSELLDHLFFHYEFQNQRFSAEVLGSLRQLNLAGVRMTPLKCTVVASVLGSGRHPLDEVNLASCQLDPAGLHTLMPVLLRARKLGLQLNNLGPEACRDLRDLLLHDQCQITTLRLSNNPLTAAGVGVLMDGLAGNTSVTHLSLLHTDLGDEGLELLAAQLDRNKQLQELNVAYNGAGDTVALALAKAARKHPSLELLHLYFNELSSEGRQVLRDLGGSGEGGARVVASLTEGTAVSEYWSVILSEVQRNLNSWDPVRVQRHLKLLLRDLEDSRGATLNPWRKAQLLRVESEVKTLLEQLGGSGH.

The N-terminal 84 residues, 1 to 84 (MRWGCHLPRT…EAIQRHRRNL (84 aa)), are a transit peptide targeting the mitochondrion. The required for interaction with MAVS stretch occupies residues 73-554 (ATEAIQRHRR…RILPLLFNLL (482 aa)). An NACHT domain is found at 158–481 (QTVVLYGTVG…LRFFLAPCVE (324 aa)). 164-171 (GTVGTGKS) provides a ligand contact to ATP. The segment at 554 to 972 (LKVVPRVFGR…TLLEQLGGSG (419 aa)) is required for the repression of MAVS-induced interferon signaling. The region spanning 665-692 (RQVLPPSELLDHLFFHYEFQNQRFSAEV) is the LRRNT domain. 8 LRR repeats span residues 693–716 (LGSL…VVAS), 722–745 (RHPL…TLMP), 747–775 (LLRA…LLHD), 776–799 (QCQI…VLMD), 809–832 (HLSL…LDRN), 833–855 (KQLQ…ALAK), 856–875 (AARK…ELSS), and 876–897 (EGRQ…VVAS). The LRRCT domain maps to 904–968 (VSEYWSVILS…SEVKTLLEQL (65 aa)).

It belongs to the NLRP family. As to quaternary structure, homohexamer. Interacts with MAVS. Interacts with TUFM.

The protein localises to the mitochondrion outer membrane. Participates in antiviral signaling. Acts as a negative regulator of MAVS-mediated antiviral responses, through the inhibition of the virus-induced RLH (RIG-like helicase)-MAVS interaction. Instead, promotes autophagy by interacting with TUFM and subsequently recruiting the autophagy-related proteins ATG5 and ATG12. Also regulates MAVS-dependent NLRP3 inflammasome activation to attenuate apoptosis. Has no inhibitory function on NF-kappa-B signaling pathway, but enhances NF-kappa-B and JUN N-terminal kinase dependent signaling through the production of reactive oxygen species. Regulates viral mediated-inflammation and energy metabolism in a sex-dependent manner. In females, prevents uncontrolled inflammation and energy metabolism and thus, may contribute to the sex differences observed in infectious and inflammatory diseases. The protein is NLR family member X1 (Nlrx1) of Rattus norvegicus (Rat).